The sequence spans 377 residues: Homoserine O-succinyltransferase (377 aa).

The region spanning 50 to 358 is the AB hydrolase-1 domain; sequence NAVLICHALS…PSSYGHDSFL (309 aa). The active-site Nucleophile is the Ser-156. Substrate is bound at residue Arg-226. Residues Asp-321 and His-354 contribute to the active site. Asp-355 contacts substrate.

This sequence belongs to the AB hydrolase superfamily. MetX family. As to quaternary structure, homodimer.

It localises to the cytoplasm. The catalysed reaction is L-homoserine + succinyl-CoA = O-succinyl-L-homoserine + CoA. Its pathway is amino-acid biosynthesis; L-methionine biosynthesis via de novo pathway; O-succinyl-L-homoserine from L-homoserine: step 1/1. In terms of biological role, transfers a succinyl group from succinyl-CoA to L-homoserine, forming succinyl-L-homoserine. The chain is Homoserine O-succinyltransferase from Nitrosomonas europaea (strain ATCC 19718 / CIP 103999 / KCTC 2705 / NBRC 14298).